The following is a 239-amino-acid chain: uncharacterized protein (239 aa).

Transmembrane regions (helical) follow at residues 4–24 (LIPKQHGAWAMLLIPFLLGMV), 29–49 (VIWHIPLFLGWLFLYLAVYPV), 61–81 (YQKWMCYYGFPTCCFLMISVF), 84–104 (PPLIWVGVSLLPLFLIHMYFA), 116–136 (VAGVLFFCSGGFASCWLGMGT), 139–159 (GWAWFIFLQSALFFIGSSFYV), 180–200 (LLLPFLSALFGAGWAFLAFIP), and 218–238 (IGILEIVNACFFLAVMCLFIT).

It to H.influenzae HI_1626.

It is found in the cell membrane. This is an uncharacterized protein from Bacillus subtilis (strain 168).